The primary structure comprises 88 residues: MDFFTWVIITAGFGMAFGSLGTAIGQGLAVKSALEGVARNPGASGKILTTMMIGLAMVESLAIYVFVVSMIILFANPFKDVVLELVAG.

The next 2 helical transmembrane spans lie at 4-24 and 53-73; these read FTWVIITAGFGMAFGSLGTAI and IGLAMVESLAIYVFVVSMIIL.

The protein belongs to the ATPase C chain family. In terms of assembly, F-type ATPases have 2 components, F(1) - the catalytic core - and F(0) - the membrane proton channel. F(1) has five subunits: alpha(3), beta(3), gamma(1), delta(1), epsilon(1). F(0) has three main subunits: a(1), b(2) and c(10-14). The alpha and beta chains form an alternating ring which encloses part of the gamma chain. F(1) is attached to F(0) by a central stalk formed by the gamma and epsilon chains, while a peripheral stalk is formed by the delta and b chains.

It localises to the cell inner membrane. Functionally, f(1)F(0) ATP synthase produces ATP from ADP in the presence of a proton or sodium gradient. F-type ATPases consist of two structural domains, F(1) containing the extramembraneous catalytic core and F(0) containing the membrane proton channel, linked together by a central stalk and a peripheral stalk. During catalysis, ATP synthesis in the catalytic domain of F(1) is coupled via a rotary mechanism of the central stalk subunits to proton translocation. Key component of the F(0) channel; it plays a direct role in translocation across the membrane. A homomeric c-ring of between 10-14 subunits forms the central stalk rotor element with the F(1) delta and epsilon subunits. The chain is ATP synthase subunit c 1 from Syntrophotalea carbinolica (strain DSM 2380 / NBRC 103641 / GraBd1) (Pelobacter carbinolicus).